Here is a 61-residue protein sequence, read N- to C-terminus: Small ribosomal subunit protein uS14B (61 aa).

Positions 24, 27, 40, and 43 each coordinate Zn(2+).

The protein belongs to the universal ribosomal protein uS14 family. Zinc-binding uS14 subfamily. Part of the 30S ribosomal subunit. Contacts proteins S3 and S10. Requires Zn(2+) as cofactor.

Functionally, binds 16S rRNA, required for the assembly of 30S particles and may also be responsible for determining the conformation of the 16S rRNA at the A site. The protein is Small ribosomal subunit protein uS14B of Streptococcus agalactiae serotype Ia (strain ATCC 27591 / A909 / CDC SS700).